The primary structure comprises 270 residues: NAD(P)H-hydrate epimerase (270 aa).

Positions 25–234 (FQQLMDLMQN…DLLAPEEIYQ (210 aa)) constitute a YjeF N-terminal domain. 73 to 77 (DNGGQ) contacts (6S)-NADPHX. Residues Asn-74 and Asp-144 each coordinate K(+). (6S)-NADPHX is bound by residues 148-154 (GVGLYGH) and Glu-177. Thr-180 contacts K(+).

It belongs to the NnrE/AIBP family. It depends on K(+) as a cofactor.

The catalysed reaction is (6R)-NADHX = (6S)-NADHX. The enzyme catalyses (6R)-NADPHX = (6S)-NADPHX. Functionally, catalyzes the epimerization of the S- and R-forms of NAD(P)HX, a damaged form of NAD(P)H that is a result of enzymatic or heat-dependent hydration. This is a prerequisite for the S-specific NAD(P)H-hydrate dehydratase to allow the repair of both epimers of NAD(P)HX. This is NAD(P)H-hydrate epimerase from Legionella pneumophila (strain Paris).